We begin with the raw amino-acid sequence, 116 residues long: Large ribosomal subunit protein uL18 (116 aa).

It belongs to the universal ribosomal protein uL18 family. As to quaternary structure, part of the 50S ribosomal subunit; part of the 5S rRNA/L5/L18/L25 subcomplex. Contacts the 5S and 23S rRNAs.

This is one of the proteins that bind and probably mediate the attachment of the 5S RNA into the large ribosomal subunit, where it forms part of the central protuberance. The chain is Large ribosomal subunit protein uL18 from Pseudomonas putida (strain W619).